A 229-amino-acid chain; its full sequence is Protein GLC8 (229 aa).

Disordered regions lie at residues 1-21 (MGGI…QQDP), 35-62 (TQKN…EIIG), and 107-229 (QFQD…TKEP). Ser-12 is subject to Phosphoserine. Positions 107–117 (QFQDIHIDEPK) are enriched in basic and acidic residues. Thr-118 carries the post-translational modification Phosphothreonine; by PHO85. Position 158 is a phosphoserine (Ser-158). Residues 164–173 (FEIKENKQPD) show a composition bias toward basic and acidic residues. Acidic residues predominate over residues 175 to 184 (ETNDENDEDS). Residue Ser-184 is modified to Phosphoserine. Over residues 185–196 (PEARHKKFEEMR) the composition is skewed to basic and acidic residues.

Post-translationally, phosphorylated by the cyclin-CDKs PCL6-PHO85 and PCL7-PHO85. Phosphorylation of Thr-118 inactivates GLC8.

Modulator of GLC7 type-1 protein phosphatase. In Saccharomyces cerevisiae (strain ATCC 204508 / S288c) (Baker's yeast), this protein is Protein GLC8 (GLC8).